We begin with the raw amino-acid sequence, 141 residues long: Nucleoside diphosphate kinase (141 aa).

Residues Lys11, Phe59, Arg87, Thr93, Arg104, and Asn114 each contribute to the ATP site. His117 (pros-phosphohistidine intermediate) is an active-site residue.

It belongs to the NDK family. As to quaternary structure, homotetramer. It depends on Mg(2+) as a cofactor.

It localises to the cytoplasm. It catalyses the reaction a 2'-deoxyribonucleoside 5'-diphosphate + ATP = a 2'-deoxyribonucleoside 5'-triphosphate + ADP. The catalysed reaction is a ribonucleoside 5'-diphosphate + ATP = a ribonucleoside 5'-triphosphate + ADP. In terms of biological role, major role in the synthesis of nucleoside triphosphates other than ATP. The ATP gamma phosphate is transferred to the NDP beta phosphate via a ping-pong mechanism, using a phosphorylated active-site intermediate. The chain is Nucleoside diphosphate kinase from Janthinobacterium sp. (strain Marseille) (Minibacterium massiliensis).